The following is a 145-amino-acid chain: MKKSARRQSRELATQGLYQWLLSNASSGEIDAQLRGALGYDKADKELLEAILHGVIREHATLVEALTPSLDRPIEQLSPVERAVLLIATFELTHHVETPYRVIINEAVELAKTFGGSDGYKYVNGVLDKLAAKLRPAETQARRNG.

Belongs to the NusB family.

Its function is as follows. Involved in transcription antitermination. Required for transcription of ribosomal RNA (rRNA) genes. Binds specifically to the boxA antiterminator sequence of the ribosomal RNA (rrn) operons. This chain is Transcription antitermination protein NusB, found in Burkholderia lata (strain ATCC 17760 / DSM 23089 / LMG 22485 / NCIMB 9086 / R18194 / 383).